A 524-amino-acid polypeptide reads, in one-letter code: uncharacterized protein (524 aa).

Residues 1–65 (MSDPFFTRPE…IDEENEDTYE (65 aa)) form a disordered region. Basic and acidic residues predominate over residues 21–32 (SKREKENQKLER). Positions 51 to 64 (GFEDEIDEENEDTY) are enriched in acidic residues. WD repeat units lie at residues 131–176 (IETA…DTEN), 206–245 (DHVKEITCLAISNDGRWIVTGGLDHRIVIRDSVTLEPQHC), 248–287 (HHRDAVMGLAMRRGTNEMFSCSADRSIKVWSLDQMSYIET), 290–329 (GHQDVIFGVDALARERCVSVGGRDRTSRLWKIVEESQLVF), 342–380 (YMEGSVDCVAMIDEDHFVTGSDNGVIALWSVQRKKPLFT), 409–448 (PQPRWITSLAAIPYSNLFASGSWDGNIRLWKIAEGLRSFE), and 457–503 (SVYG…PNSG).

Its subcellular location is the nucleus. This is an uncharacterized protein from Schizosaccharomyces pombe (strain 972 / ATCC 24843) (Fission yeast).